A 53-amino-acid chain; its full sequence is Large ribosomal subunit protein bL32c (53 aa).

Belongs to the bacterial ribosomal protein bL32 family.

Its subcellular location is the plastid. The protein resides in the chloroplast. The polypeptide is Large ribosomal subunit protein bL32c (Phaseolus vulgaris (Kidney bean)).